The following is a 984-amino-acid chain: uncharacterized protein (984 aa).

Residues 941 to 984 (FGPSGPGPNQGPGDDYNNFKSTKYPRNGYNKYQPNNRIHSRNRY) are disordered.

Its subcellular location is the virion. This is an uncharacterized protein from Acanthamoeba polyphaga (Amoeba).